The sequence spans 295 residues: MITELHGIDIRENEPLKHYTYTKVGGPADFLAFPRNHYELSRIVAYANKENMPWLVLGNASNLIVRDGGIRGFVIMFDKLNAVHLNGYTLEAEAGANLIETTKIAKFHSLTGFEFACGIPGSIGGAVFMNAGAYGGEISHIFLSAKVLTSSGEIKTISARDMAFGYRHSAIQETGDIVISAKFALKPGNYDTISQEMNRLNHLRQLKQPLEFPSCGSVFKRPPGHFAGQLIMEANLKGHRIGGVEVSEKHAGFMINVVDGTAKDYEDLIAYVIETVENHSGVRLEPEVRIIGENL.

The region spanning Lys-23–Gly-188 is the FAD-binding PCMH-type domain. Residue Arg-167 is part of the active site. Residue Ser-217 is the Proton donor of the active site. Glu-287 is an active-site residue.

The protein belongs to the MurB family. The cofactor is FAD.

It is found in the cytoplasm. It carries out the reaction UDP-N-acetyl-alpha-D-muramate + NADP(+) = UDP-N-acetyl-3-O-(1-carboxyvinyl)-alpha-D-glucosamine + NADPH + H(+). It functions in the pathway cell wall biogenesis; peptidoglycan biosynthesis. Functionally, cell wall formation. The sequence is that of UDP-N-acetylenolpyruvoylglucosamine reductase from Streptococcus pyogenes serotype M28 (strain MGAS6180).